Consider the following 75-residue polypeptide: Guanine nucleotide-binding protein G(I)/G(S)/G(O) subunit gamma-4 (75 aa).

Residue cysteine 72 is modified to Cysteine methyl ester. Residue cysteine 72 is the site of S-geranylgeranyl cysteine attachment. A propeptide spans 73-75 (TIL) (removed in mature form).

It belongs to the G protein gamma family. As to quaternary structure, g proteins are composed of 3 units, alpha, beta and gamma. Interacts with beta-1 and beta-2, but not with beta-3. Interacts with KCNK1. Interacts (via C-terminus) with KCNK2/TREK-1 (via N-terminus); this interaction confers ion selectivity to Cl(-) and L-glutamate. In terms of tissue distribution, brain.

It localises to the cell membrane. Functionally, guanine nucleotide-binding proteins (G proteins) are involved as a modulator or transducer in various transmembrane signaling systems. The beta and gamma chains are required for the GTPase activity, for replacement of GDP by GTP, and for G protein-effector interaction. The chain is Guanine nucleotide-binding protein G(I)/G(S)/G(O) subunit gamma-4 (Gng4) from Mus musculus (Mouse).